The sequence spans 438 residues: AP-2 complex subunit mu (438 aa).

Residues 177–437 enclose the MHD domain; it reads KNEVFLDIVE…ITKAGSYEIR (261 aa).

It belongs to the adaptor complexes medium subunit family. Adaptor protein complex 2 (AP-2) is a heterotetramer composed of two large adaptins (alpha-type and beta-type subunits), a medium adaptin (mu-type subunit) and a small adaptin (sigma-type subunit).

It is found in the cell membrane. Its subcellular location is the membrane. The protein localises to the coated pit. The protein resides in the golgi apparatus. It localises to the trans-Golgi network membrane. Subunit of the adaptor protein complex 2 (AP-2). Adaptor protein complexes function in protein transport via transport vesicles in different membrane traffic pathways. Adaptor protein complexes are vesicle coat components and appear to be involved in cargo selection and vesicle formation. AP-2 is involved in clathrin-dependent endocytosis in which cargo proteins are incorporated into vesicles surrounded by clathrin (clathrin-coated vesicles, CCVs) which are destined for fusion with the early endosome. AP-2 recognizes Y-X-X-Phi endocytosis signal motif within the cytosolic tails of transmembrane cargo molecules. The complex binds polyphosphoinositides. The sequence is that of AP-2 complex subunit mu (AP2M) from Arabidopsis thaliana (Mouse-ear cress).